A 109-amino-acid polypeptide reads, in one-letter code: Nucleoid-associated protein PC1_1077 (109 aa).

Belongs to the YbaB/EbfC family. Homodimer.

It localises to the cytoplasm. The protein resides in the nucleoid. Its function is as follows. Binds to DNA and alters its conformation. May be involved in regulation of gene expression, nucleoid organization and DNA protection. This is Nucleoid-associated protein PC1_1077 from Pectobacterium carotovorum subsp. carotovorum (strain PC1).